The sequence spans 473 residues: H(+)/Cl(-) exchange transporter ClcA (473 aa).

Residues 1-32 (MKTDTPSLETPQAARLRRRQLIRQLLERDKTP) are Cytoplasmic-facing. A helical transmembrane segment spans residues 33–69 (LAILFMAAVVGTLVGLAAVAFDKGVAWLQNQRMGALV). Over 70–76 (HTADNYP) the chain is Periplasmic. Residues 77-100 (LLLTVAFLCSAVLAMFGYFLVRKY) traverse the membrane as a helical segment. The Selectivity filter part_1 motif lies at 106-110 (GSGIP). Ser107 contributes to the chloride binding site. Residues 109 to 116 (IPEIEGAL) constitute an intramembrane region (helical). Residues 117-123 (EDQRPVR) are Cytoplasmic-facing. 2 helical membrane passes run 124-141 (WWRV…TLGG) and 148-166 (EGPT…LDVF). The Selectivity filter part_2 signature appears at 146–150 (GREGP). The Cytoplasmic portion of the chain corresponds to 167–176 (RLKGDEARHT). 2 consecutive intramembrane regions (helical) follow at residues 177-189 (LLAT…LAAA) and 193-201 (PLAGILFII). The Cytoplasmic segment spans residues 202-214 (EEMRPQFRYTLIS). A helical transmembrane segment spans residues 215–232 (IKAVFIGVIMSTIMYRIF). At 233–252 (NHEVALIDVGKLSDAPLNTL) the chain is on the periplasmic side. Residues 253–281 (WLYLILGIIFGIFGPIFNKWVLGMQDLLH) traverse the membrane as a helical segment. The Cytoplasmic segment spans residues 282-287 (RVHGGN). The chain crosses the membrane as a helical span at residues 288–309 (ITKWVLMGGAIGGLCGLLGFVA). The Periplasmic segment spans residues 310–329 (PATSGGGFNLIPIATAGNFS). 2 helical membrane-spanning segments follow: residues 330–349 (MGML…LCFS) and 355–376 (GIFA…MVAV). The Selectivity filter part_3 motif lies at 355-359 (GIFAP). Positions 356 and 357 each coordinate chloride. At 377-386 (ELFPQYHLEA) the chain is on the periplasmic side. Positions 387-401 (GTFAIAGMGALLAAS) form an intramembrane region, helical. An intramembrane region (note=Loop between two helices) is located at residues 402-404 (IRA). An intramembrane region (helical) is located at residues 405–416 (PLTGIILVLEMT). Residues 417 to 421 (DNYQL) constitute an intramembrane region (note=Loop between two helices). Residues 422 to 438 (ILPMIITGLGATLLAQF) traverse the membrane as a helical segment. Topologically, residues 439-473 (TGGKPLYSAILARTLAKQEAEQLARSKAASASENT) are cytoplasmic. Tyr445 provides a ligand contact to chloride.

This sequence belongs to the chloride channel (TC 2.A.49) family. ClcA subfamily. As to quaternary structure, homodimer.

The protein localises to the cell inner membrane. The enzyme catalyses 2 chloride(in) + H(+)(out) = 2 chloride(out) + H(+)(in). Its function is as follows. Proton-coupled chloride transporter. Functions as antiport system and exchanges two chloride ions for 1 proton. Probably acts as an electrical shunt for an outwardly-directed proton pump that is linked to amino acid decarboxylation, as part of the extreme acid resistance (XAR) response. This chain is H(+)/Cl(-) exchange transporter ClcA, found in Escherichia coli O157:H7.